We begin with the raw amino-acid sequence, 513 residues long: Maturase K (513 aa).

The protein belongs to the intron maturase 2 family. MatK subfamily.

It localises to the plastid. Its subcellular location is the chloroplast. Its function is as follows. Usually encoded in the trnK tRNA gene intron. Probably assists in splicing its own and other chloroplast group II introns. In Danthonia spicata (Poverty oatgrass), this protein is Maturase K.